We begin with the raw amino-acid sequence, 212 residues long: Transcriptional repressor CcpN (212 aa).

The HTH deoR-type domain occupies 6 to 70 (LNKRQEHILQ…FYTGKTGTQL (65 aa)). The H-T-H motif DNA-binding region spans 23–42 (ITGEHIAEKLNLTRATLRPD). 2 CBS domains span residues 83 to 139 (FQSI…QQEL) and 148 to 211 (MTRM…ENEI).

Functionally, transcription repressor that binds to the promoter of gapB and pckA genes, preventing their expression. Acts as a regulator for catabolite repression of gluconeogenic genes. In Bacillus subtilis (strain 168), this protein is Transcriptional repressor CcpN (ccpN).